Here is a 577-residue protein sequence, read N- to C-terminus: Lysine-specific demethylase 7B (577 aa).

The PHD-type zinc-finger motif lies at Q5–H56. A JmjC domain is found at F198–R354. Residue T247 participates in substrate binding. Fe cation is bound by residues H250 and D252. K267 contributes to the substrate binding site. H322 contributes to the Fe cation binding site. Positions C460–H513 are disordered. The segment covering H472–H502 has biased composition (basic residues).

The protein belongs to the JHDM1 histone demethylase family. JHDM1D subfamily. Fe(2+) serves as cofactor. In terms of tissue distribution, predominantly expressed in brain.

It is found in the nucleus. Functionally, histone demethylase required for brain development. Specifically demethylates dimethylated 'Lys-9' and 'Lys-27' (H3K9me2 and H3K27me2, respectively) of histone H3 and monomethylated histone H4 'Lys-20' residue (H4K20Me1), thereby playing a central role in histone code. This Danio rerio (Zebrafish) protein is Lysine-specific demethylase 7B (jhdm1db).